The chain runs to 411 residues: Isocitrate dehydrogenase [NADP] peroxisomal (411 aa).

Residues 78–80 (TIT) and R85 contribute to the NADP(+) site. Residue T80 coordinates substrate. Residues 97–103 (SPNGTLR), R112, and R135 contribute to the substrate site. Position 254 (D254) interacts with Mn(2+). Residue K262 coordinates NADP(+). D277 contacts Mn(2+). NADP(+)-binding positions include 312–317 (GTVTRH) and N330.

It belongs to the isocitrate and isopropylmalate dehydrogenases family. Requires Mg(2+) as cofactor. Mn(2+) serves as cofactor.

It localises to the peroxisome. It catalyses the reaction D-threo-isocitrate + NADP(+) = 2-oxoglutarate + CO2 + NADPH. Functionally, may play a role in N-alkane metabolism, glutamate synthesis, and/or NADPH generation in the peroxisomes. The polypeptide is Isocitrate dehydrogenase [NADP] peroxisomal (IDP2) (Candida tropicalis (Yeast)).